The following is a 346-amino-acid chain: Holliday junction branch migration complex subunit RuvB (346 aa).

The interval 2-183 (TDDRIIGAGA…FGIVQRLEFY (182 aa)) is large ATPase domain (RuvB-L). ATP is bound by residues Ile-22, Arg-23, Gly-64, Lys-67, Thr-68, Thr-69, 130-132 (EDF), Arg-173, Tyr-183, and Arg-220. Thr-68 provides a ligand contact to Mg(2+). A small ATPAse domain (RuvB-S) region spans residues 184–254 (SVEELTRIVR…VAQAAMKMLK (71 aa)). Residues 257–346 (PEGFDELDRR…DLFAEVPDVG (90 aa)) are head domain (RuvB-H). Residues Arg-293, Arg-312, and Arg-317 each contribute to the DNA site.

Belongs to the RuvB family. In terms of assembly, homohexamer. Forms an RuvA(8)-RuvB(12)-Holliday junction (HJ) complex. HJ DNA is sandwiched between 2 RuvA tetramers; dsDNA enters through RuvA and exits via RuvB. An RuvB hexamer assembles on each DNA strand where it exits the tetramer. Each RuvB hexamer is contacted by two RuvA subunits (via domain III) on 2 adjacent RuvB subunits; this complex drives branch migration. In the full resolvosome a probable DNA-RuvA(4)-RuvB(12)-RuvC(2) complex forms which resolves the HJ.

It is found in the cytoplasm. The catalysed reaction is ATP + H2O = ADP + phosphate + H(+). Functionally, the RuvA-RuvB-RuvC complex processes Holliday junction (HJ) DNA during genetic recombination and DNA repair, while the RuvA-RuvB complex plays an important role in the rescue of blocked DNA replication forks via replication fork reversal (RFR). RuvA specifically binds to HJ cruciform DNA, conferring on it an open structure. The RuvB hexamer acts as an ATP-dependent pump, pulling dsDNA into and through the RuvAB complex. RuvB forms 2 homohexamers on either side of HJ DNA bound by 1 or 2 RuvA tetramers; 4 subunits per hexamer contact DNA at a time. Coordinated motions by a converter formed by DNA-disengaged RuvB subunits stimulates ATP hydrolysis and nucleotide exchange. Immobilization of the converter enables RuvB to convert the ATP-contained energy into a lever motion, pulling 2 nucleotides of DNA out of the RuvA tetramer per ATP hydrolyzed, thus driving DNA branch migration. The RuvB motors rotate together with the DNA substrate, which together with the progressing nucleotide cycle form the mechanistic basis for DNA recombination by continuous HJ branch migration. Branch migration allows RuvC to scan DNA until it finds its consensus sequence, where it cleaves and resolves cruciform DNA. This chain is Holliday junction branch migration complex subunit RuvB, found in Stenotrophomonas maltophilia (strain K279a).